The following is a 423-amino-acid chain: Gamma-glutamyl phosphate reductase (423 aa).

This sequence belongs to the gamma-glutamyl phosphate reductase family.

The protein resides in the cytoplasm. It carries out the reaction L-glutamate 5-semialdehyde + phosphate + NADP(+) = L-glutamyl 5-phosphate + NADPH + H(+). It participates in amino-acid biosynthesis; L-proline biosynthesis; L-glutamate 5-semialdehyde from L-glutamate: step 2/2. Catalyzes the NADPH-dependent reduction of L-glutamate 5-phosphate into L-glutamate 5-semialdehyde and phosphate. The product spontaneously undergoes cyclization to form 1-pyrroline-5-carboxylate. This chain is Gamma-glutamyl phosphate reductase, found in Pseudomonas putida (strain ATCC 47054 / DSM 6125 / CFBP 8728 / NCIMB 11950 / KT2440).